A 752-amino-acid chain; its full sequence is MRFVSLAVGAALLGAAGASSISSNVGLLKANGVALGNWEAAYEKASAFVSGLTTDQKLALITGSNVESTNGNFTPLYFLDGDMGLQDFYYVSAFSLSSALAMTWDRDAIYEQAKAVGSEFYNKGVQVVAGPTSQPLGRTPWGGRGVEGFGPDPYLNGLATGLTTKGYVDAGVIPGGKHFLLYEQETNRTSSFGSSGEGSPYSSNADDKTIHETYLWPFYDAVKNGAGAVMCAMTKVNGTMACENSDLLMKMLKTELGFPGMVWPDMNGQNSAKGSALGGEDYGSSSIWSTSTMESFLSNGTLSEARLNDMAIRNLIGYYYVNLDNGRQPTRQTTDVYVDVRANHSKLIRENGAKSMALLKNEGVLPLSKPRVMSIFGAHAGPIMGGPNSNVDVMGSGPTYQGHLATGSGSGMASMPYLITPYGALTNKAAQDGTVLRWVLNDTYSSGGGSSLVPSSTSSTAVEPSFENFATGSDICLVFINALAGEGADRTELYNADQDAMVNTVADNCNNTVAVVNTVGPRLLDQWIEHDNVTAVLYGSLLGQESGNSIVDLLYGDVNPSGRLVHTIAKNESDYNVGLCYTAQCNFTEGVYLDYRYFDAHNITPRYPFGHGLSYTTFHYSSLAIKAPSSITKAPKGNLTVGGPSDLWDVVGTVSARIANNGTLSGAEVPQLYLGFPDSADQPVRQLRGFDRVELSAGQEAVVTFNLRRRDISYWNVKTQQWMVAGGKYTVFVGGSSRDLRLNGTFFLWVGS.

The signal sequence occupies residues 1-18 (MRFVSLAVGAALLGAAGA). N-linked (GlcNAc...) asparagine glycans are attached at residues N187 and N237. D265 is an active-site residue. 10 N-linked (GlcNAc...) asparagine glycosylation sites follow: N299, N343, N441, N510, N532, N571, N586, N638, N661, and N743.

The protein belongs to the glycosyl hydrolase 3 family.

The protein localises to the secreted. The enzyme catalyses Hydrolysis of terminal, non-reducing beta-D-glucosyl residues with release of beta-D-glucose.. It participates in glycan metabolism; cellulose degradation. Functionally, beta-glucosidases are one of a number of cellulolytic enzymes involved in the degradation of cellulosic biomass. Catalyzes the last step releasing glucose from the inhibitory cellobiose. The polypeptide is Probable beta-glucosidase D (bglD) (Aspergillus flavus (strain ATCC 200026 / FGSC A1120 / IAM 13836 / NRRL 3357 / JCM 12722 / SRRC 167)).